Consider the following 177-residue polypeptide: MANQEKIEAVALLKGKLETRNNFILACYSGLTVEEITGLRAQLRKEGSEMKVLKNNLFLRALKESGAHKDKNITFGSEYQGPLAAIFAKDNLPAIAKVCKDFAKNNKNLIVKAGYMDGSVLDANGVDAIAGLPSREQLLAQIAGGINGPARTIASGINQIIASLARAIQATAEKNNA.

The protein belongs to the universal ribosomal protein uL10 family. As to quaternary structure, part of the ribosomal stalk of the 50S ribosomal subunit. The N-terminus interacts with L11 and the large rRNA to form the base of the stalk. The C-terminus forms an elongated spine to which L12 dimers bind in a sequential fashion forming a multimeric L10(L12)X complex.

Forms part of the ribosomal stalk, playing a central role in the interaction of the ribosome with GTP-bound translation factors. This Leptospira interrogans serogroup Icterohaemorrhagiae serovar copenhageni (strain Fiocruz L1-130) protein is Large ribosomal subunit protein uL10.